Here is a 394-residue protein sequence, read N- to C-terminus: Elongation factor Tu (394 aa).

The 195-residue stretch at 10 to 204 folds into the tr-type G domain; the sequence is KPHVNVGTIG…FLDSYIPEPE (195 aa). A G1 region spans residues 19–26; it reads GHVDHGKT. 19-26 contributes to the GTP binding site; that stretch reads GHVDHGKT. Position 26 (Thr-26) interacts with Mg(2+). Residues 60 to 64 are G2; it reads GITIN. Residues 81-84 form a G3 region; that stretch reads DCPG. Residues 81–85 and 136–139 contribute to the GTP site; these read DCPGH and NKCD. The segment at 136–139 is G4; it reads NKCD. The tract at residues 174-176 is G5; that stretch reads SAL.

The protein belongs to the TRAFAC class translation factor GTPase superfamily. Classic translation factor GTPase family. EF-Tu/EF-1A subfamily. As to quaternary structure, monomer.

The protein localises to the cytoplasm. It catalyses the reaction GTP + H2O = GDP + phosphate + H(+). Its function is as follows. GTP hydrolase that promotes the GTP-dependent binding of aminoacyl-tRNA to the A-site of ribosomes during protein biosynthesis. The polypeptide is Elongation factor Tu (Salmonella arizonae (strain ATCC BAA-731 / CDC346-86 / RSK2980)).